Consider the following 220-residue polypeptide: ATP-dependent Clp protease proteolytic subunit (220 aa).

S125 (nucleophile) is an active-site residue. H150 is an active-site residue.

The protein belongs to the peptidase S14 family. In terms of assembly, fourteen ClpP subunits assemble into 2 heptameric rings which stack back to back to give a disk-like structure with a central cavity, resembling the structure of eukaryotic proteasomes.

Its subcellular location is the cytoplasm. The catalysed reaction is Hydrolysis of proteins to small peptides in the presence of ATP and magnesium. alpha-casein is the usual test substrate. In the absence of ATP, only oligopeptides shorter than five residues are hydrolyzed (such as succinyl-Leu-Tyr-|-NHMec, and Leu-Tyr-Leu-|-Tyr-Trp, in which cleavage of the -Tyr-|-Leu- and -Tyr-|-Trp bonds also occurs).. Its function is as follows. Cleaves peptides in various proteins in a process that requires ATP hydrolysis. Has a chymotrypsin-like activity. Plays a major role in the degradation of misfolded proteins. The protein is ATP-dependent Clp protease proteolytic subunit of Bacteroides thetaiotaomicron (strain ATCC 29148 / DSM 2079 / JCM 5827 / CCUG 10774 / NCTC 10582 / VPI-5482 / E50).